The following is a 915-amino-acid chain: Mitogen-activated protein kinase kinae kinase MST11 (915 aa).

3 disordered regions span residues 1 to 65, 134 to 171, and 183 to 249; these read MAML…PKHW, KKRN…NPSV, and GMAY…TRTD. The span at 26 to 45 shows a compositional bias: low complexity; sequence AQASYPPSRRAPAVPPASQS. One can recognise an SAM domain in the interval 65 to 128; it reads WDEDKVCEYL…FLSIKKLRTK (64 aa). 2 stretches are compositionally biased toward low complexity: residues 152–163 and 188–203; these read SESPSKPFHSSS and PSRP…PLPS. In terms of domain architecture, Ras-associating spans 263–353; it reads NQDVIRVIST…NRLILRRVPA (91 aa). Residues 641 to 911 enclose the Protein kinase domain; it reads WMKGALIGQG…ADDLMLSPFL (271 aa). ATP contacts are provided by residues 647–655 and Lys-670; that span reads IGQGSFGCV.

It belongs to the protein kinase superfamily. STE Ser/Thr protein kinase family. MAP kinase kinase kinase subfamily. As to quaternary structure, interacts with the adapter protein MST50.

The enzyme catalyses L-seryl-[protein] + ATP = O-phospho-L-seryl-[protein] + ADP + H(+). It catalyses the reaction L-threonyl-[protein] + ATP = O-phospho-L-threonyl-[protein] + ADP + H(+). Its function is as follows. Mitogen-activated protein kinase kinase kinase; part of the MST11-MST7-PMK1 MAP kinase (MAPK) cascade that is essential for appressorium formation, penetration and invasive growth. The MST11-MST7-PMK1 MAP kinase cascade transduces signals from the cell surface sensors MDB2 and SHO1 that recognize various surface signals such as surface hydrophobicity, cutin monomers, and rice leaf waxes. MST11 acts as the upstream MAPKKK that directly phosphorylates MAPKK MST7. MST11 but not MST7 may also be involved in the OSM1 MAPK pathway in response to osmotic stresses. The sequence is that of Mitogen-activated protein kinase kinae kinase MST11 from Pyricularia oryzae (strain 70-15 / ATCC MYA-4617 / FGSC 8958) (Rice blast fungus).